Consider the following 622-residue polypeptide: Threonine--tRNA ligase (622 aa).

The segment at 1 to 141 (MKTLLIHSDY…SRKITTERKE (141 aa)) is editing domain. Residues 199 to 498 (PHVKYIKEKE…TLENKPPALP (300 aa)) are catalytic. The Zn(2+) site is built by Cys-291, His-343, and His-467.

Belongs to the class-II aminoacyl-tRNA synthetase family. Homodimer. Requires Zn(2+) as cofactor.

It is found in the cytoplasm. It catalyses the reaction tRNA(Thr) + L-threonine + ATP = L-threonyl-tRNA(Thr) + AMP + diphosphate + H(+). Functionally, catalyzes the attachment of threonine to tRNA(Thr) in a two-step reaction: L-threonine is first activated by ATP to form Thr-AMP and then transferred to the acceptor end of tRNA(Thr). Also edits incorrectly charged L-seryl-tRNA(Thr). This chain is Threonine--tRNA ligase, found in Methanococcus maripaludis (strain C5 / ATCC BAA-1333).